The primary structure comprises 335 residues: Large ribosomal subunit protein uL10 (335 aa).

The disordered stretch occupies residues 300 to 335 (QVSEQAAEKKEEKKEEEKKGPSEEEIGGGLSSLFGG). The span at 305–321 (AAEKKEEKKEEEKKGPS) shows a compositional bias: basic and acidic residues. A compositionally biased stretch (gly residues) spans 326-335 (GGGLSSLFGG).

It belongs to the universal ribosomal protein uL10 family. As to quaternary structure, part of the 50S ribosomal subunit. Forms part of the ribosomal stalk which helps the ribosome interact with GTP-bound translation factors. Forms a heptameric L10(L12)2(L12)2(L12)2 complex, where L10 forms an elongated spine to which the L12 dimers bind in a sequential fashion.

In terms of biological role, forms part of the ribosomal stalk, playing a central role in the interaction of the ribosome with GTP-bound translation factors. The sequence is that of Large ribosomal subunit protein uL10 from Sulfolobus acidocaldarius (strain ATCC 33909 / DSM 639 / JCM 8929 / NBRC 15157 / NCIMB 11770).